Consider the following 527-residue polypeptide: EGF domain-specific O-linked N-acetylglucosamine transferase (527 aa).

The first 17 residues, 1–17 (MLMLFVFGVLLHEVSLS), serve as a signal peptide directing secretion. The short motif at 295-297 (DYD) is the Required for optimal activity element. Residue Asn-354 is glycosylated (N-linked (GlcNAc...) asparagine). The Prevents secretion from ER motif lies at 524 to 527 (HDEL).

This sequence belongs to the glycosyltransferase 61 family.

The protein resides in the endoplasmic reticulum lumen. It catalyses the reaction L-seryl-[protein] + UDP-N-acetyl-alpha-D-glucosamine = 3-O-(N-acetyl-beta-D-glucosaminyl)-L-seryl-[protein] + UDP + H(+). It carries out the reaction L-threonyl-[protein] + UDP-N-acetyl-alpha-D-glucosamine = 3-O-(N-acetyl-beta-D-glucosaminyl)-L-threonyl-[protein] + UDP + H(+). Its function is as follows. Catalyzes the transfer of a single N-acetylglucosamine from UDP-GlcNAc to a serine or threonine residue in extracellular proteins resulting in their modification with a beta-linked N-acetylglucosamine (O-GlcNAc). Specifically glycosylates the Thr residue located between the fifth and sixth conserved cysteines of folded EGF-like domains. This chain is EGF domain-specific O-linked N-acetylglucosamine transferase (EOGT), found in Pan troglodytes (Chimpanzee).